The sequence spans 322 residues: Heterogeneous nuclear ribonucleoprotein D-like (322 aa).

The interval 1–36 (MTGTARSALPLPQSPARALRPSGAARAAPSLSPSRF) is disordered. Arg-6 is subject to Omega-N-methylarginine. Low complexity predominate over residues 14–36 (SPARALRPSGAARAAPSLSPSRF). RRM domains follow at residues 51–133 (NKMF…KGKE) and 136–215 (KKVF…QPKE). Residue Lys-64 is modified to N6-methyllysine. Residue Lys-112 forms a Glycyl lysine isopeptide (Lys-Gly) (interchain with G-Cter in SUMO2) linkage. The residue at position 119 (Lys-119) is an N6-acetyllysine. Ser-144 carries the post-translational modification Phosphoserine. Disordered regions lie at residues 216–251 (VYRQ…NWNQ) and 299–322 (SGQQ…YQPY). Residues 226 to 245 (GGRGAAAGGRGGARGRGRGQ) show a composition bias toward gly residues. The tract at residues 245 to 322 (QGQNWNQGFN…GNHQNNYQPY (78 aa)) is necessary for interaction with TNPO1. Residue Arg-310 is modified to Dimethylated arginine; alternate. Arg-310 bears the Omega-N-methylarginine; alternate mark.

As to quaternary structure, interacts with TNPO1 and ZNF148. Dimethylation of Arg-310 is probably of the asymmetric type.

The protein resides in the nucleus. It is found in the cytoplasm. Functionally, acts as a transcriptional regulator. Promotes transcription repression. Promotes transcription activation in differentiated myotubes. Binds to double- and single-stranded DNA sequences. Binds to the transcription suppressor CATR sequence of the COX5B promoter. Binds with high affinity to RNA molecules that contain AU-rich elements (AREs) found within the 3'-UTR of many proto-oncogenes and cytokine mRNAs. Binds both to nuclear and cytoplasmic poly(A) mRNAs. Binds to poly(G) and poly(A), but not to poly(U) or poly(C) RNA homopolymers. Binds to the 5'-ACUAGC-3' RNA consensus sequence. The polypeptide is Heterogeneous nuclear ribonucleoprotein D-like (Hnrnpdl) (Rattus norvegicus (Rat)).